The chain runs to 295 residues: Homeobox protein XHOX-7.1 (295 aa).

2 disordered regions span residues 75-115 (RKPG…PISL) and 134-175 (KPES…KPRT). Over residues 84 to 97 (SSPTGSPLAGTSHS) the composition is skewed to polar residues. Residues 141 to 153 (SSWIQSPSFSPSP) show a composition bias toward low complexity. Residues 164–174 (LRKHKTNRKPR) show a composition bias toward basic residues. The homeobox DNA-binding region spans 170–229 (NRKPRTPFTTSQLLALERKFRQKQYLSIAERAEFSSSLNLTETQVKIWFQNRRAKAKRLQ).

This sequence belongs to the Msh homeobox family.

The protein resides in the nucleus. The polypeptide is Homeobox protein XHOX-7.1 (Xenopus laevis (African clawed frog)).